The primary structure comprises 165 residues: Large ribosomal subunit protein uL10 (165 aa).

The protein belongs to the universal ribosomal protein uL10 family. In terms of assembly, part of the ribosomal stalk of the 50S ribosomal subunit. The N-terminus interacts with L11 and the large rRNA to form the base of the stalk. The C-terminus forms an elongated spine to which L12 dimers bind in a sequential fashion forming a multimeric L10(L12)X complex.

In terms of biological role, forms part of the ribosomal stalk, playing a central role in the interaction of the ribosome with GTP-bound translation factors. This is Large ribosomal subunit protein uL10 from Edwardsiella ictaluri (strain 93-146).